The sequence spans 500 residues: MTTREQRIEKYHADRSVYQAVPKSESLSRTAKDRKLCTSLEEAIKRSGLKDGMTVSFHHAFRGGDFVVNMVMNKIAEMGFKNLTLASSSLIDSHFPIVEHIKNGVVTKIYSSGLRGELAEQISRGLLNEPVNIHSHGGRVHLVKSGELKIDVAFLGVPCCDTFGNANGFTGKSKCGSLGYARVDAEYADKVVLLTEEFVEYPHHPISIAQDQVDLIVQVEAVGDPKKIGGGATRMTTNPRELLIARKCAEVIFASGYFKDGFSLQTGSGGAALAVTRFLEEKMRRENITADFALGGITASMVALHEAGLIKKLLDVQSFDSVAAESLARNPNHIEVSANQYANYSSKGASVERLDMVILSALEIDTKFNVNVLTGSDGVIRGASGGHCDTAASAQVAIIVAPLVRGRIPTVVENVITCVTPGENVDILVTDHGVAVNPKRPDLIEALSKTDIPLFTIEQLCERAYSITGKPKEIEFTNKPVAVVRYRDGSVIDTVYQVKD.

As to quaternary structure, oligomer with a subunit composition of (alpha,beta,gamma)6.

The protein resides in the cytoplasm. The enzyme catalyses citrate = oxaloacetate + acetate. It catalyses the reaction citrate + acetyl-CoA = (3S)-citryl-CoA + acetate. In terms of biological role, represents a citrate:acetyl-ACP transferase. This Haemophilus influenzae (strain ATCC 51907 / DSM 11121 / KW20 / Rd) protein is Citrate lyase alpha chain (citF).